The primary structure comprises 491 residues: Glutamate--tRNA ligase (491 aa).

Residues 13-23 (PSPTGFLHIGN) carry the 'HIGH' region motif. Residues cysteine 110, cysteine 112, cysteine 137, and histidine 139 each contribute to the Zn(2+) site. The short motif at 254-258 (KLSKR) is the 'KMSKS' region element. Residue lysine 257 participates in ATP binding.

It belongs to the class-I aminoacyl-tRNA synthetase family. Glutamate--tRNA ligase type 1 subfamily. In terms of assembly, monomer. Zn(2+) serves as cofactor.

The protein localises to the cytoplasm. It carries out the reaction tRNA(Glu) + L-glutamate + ATP = L-glutamyl-tRNA(Glu) + AMP + diphosphate. In terms of biological role, catalyzes the attachment of glutamate to tRNA(Glu) in a two-step reaction: glutamate is first activated by ATP to form Glu-AMP and then transferred to the acceptor end of tRNA(Glu). This chain is Glutamate--tRNA ligase, found in Listeria monocytogenes serovar 1/2a (strain ATCC BAA-679 / EGD-e).